A 340-amino-acid polypeptide reads, in one-letter code: Methionine import ATP-binding protein MetN (340 aa).

Residues 8–246 enclose the ABC transporter domain; it reads ISVKNLNKEI…PYSSITEELF (239 aa). 40 to 47 is an ATP binding site; the sequence is GHSGSGKS.

It belongs to the ABC transporter superfamily. Methionine importer (TC 3.A.1.24) family. As to quaternary structure, the complex is composed of two ATP-binding proteins (MetN), two transmembrane proteins (MetI) and a solute-binding protein (MetQ).

Its subcellular location is the cell inner membrane. It carries out the reaction L-methionine(out) + ATP + H2O = L-methionine(in) + ADP + phosphate + H(+). It catalyses the reaction D-methionine(out) + ATP + H2O = D-methionine(in) + ADP + phosphate + H(+). Part of the ABC transporter complex MetNIQ involved in methionine import. Responsible for energy coupling to the transport system. The chain is Methionine import ATP-binding protein MetN from Chlamydia felis (strain Fe/C-56) (Chlamydophila felis).